The chain runs to 393 residues: Exosome complex component RRP45 (393 aa).

Residues 1-268 (MRDTPLSNCE…SEITELINKA (268 aa)) form an ARE binding region.

The protein belongs to the RNase PH family. In terms of assembly, component of the RNA exosome complex.

The protein resides in the cytoplasm. It localises to the nucleus. The protein localises to the nucleolus. Its subcellular location is the nucleoplasm. In terms of biological role, non-catalytic component of the RNA exosome complex which has 3'-&gt;5' exoribonuclease activity and participates in a multitude of cellular RNA processing and degradation events. In the nucleus, the RNA exosome complex is involved in proper maturation of stable RNA species such as rRNA, snRNA and snoRNA, in the elimination of RNA processing by-products and non-coding 'pervasive' transcripts, such as antisense RNA species and promoter-upstream transcripts (PROMPTs), and of mRNAs with processing defects, thereby limiting or excluding their export to the cytoplasm. In the cytoplasm, the RNA exosome complex is involved in general mRNA turnover and specifically degrades inherently unstable mRNAs containing AU-rich elements (AREs) within their 3' untranslated regions, and in RNA surveillance pathways, preventing translation of aberrant mRNAs. The sequence is that of Exosome complex component RRP45 from Danio rerio (Zebrafish).